Consider the following 250-residue polypeptide: MAVTKLVLLRHGESEWNRENRFTGWTDVELSEKGRQEALAAGRLLKAQGFSFDIAYTSVLKRAIHTLWHVLDKLDQPWLPVEKSWKLNERHYGALQGLNKAETAQQYGDEQVKLWRRAFAITPPALTPDDPRYPGHDPRYAALSADELPLTESLATTIERVIPYWQQQIAPRISAGERIIIAAHGNSLRALVKHLDHLSEGEIVELNIPTGVPLVYEFDKNMRPLHHYYLGDATEIAARQSAVANQGKAG.

Substrate-binding positions include 10–17 (RHGESEWN), 23–24 (TG), arginine 62, 89–92 (ERHY), lysine 100, 116–117 (RR), and 185–186 (GN). Residue histidine 11 is the Tele-phosphohistidine intermediate of the active site. Glutamate 89 functions as the Proton donor/acceptor in the catalytic mechanism.

This sequence belongs to the phosphoglycerate mutase family. BPG-dependent PGAM subfamily. As to quaternary structure, homodimer.

The enzyme catalyses (2R)-2-phosphoglycerate = (2R)-3-phosphoglycerate. Its pathway is carbohydrate degradation; glycolysis; pyruvate from D-glyceraldehyde 3-phosphate: step 3/5. In terms of biological role, catalyzes the interconversion of 2-phosphoglycerate and 3-phosphoglycerate. The polypeptide is 2,3-bisphosphoglycerate-dependent phosphoglycerate mutase (Edwardsiella ictaluri (strain 93-146)).